Here is a 99-residue protein sequence, read N- to C-terminus: Ubiquitin-related modifier 1 homolog 2 (99 aa).

Residue Gly99 is modified to 1-thioglycine. Gly99 is covalently cross-linked (Glycyl lysine isopeptide (Gly-Lys) (interchain with K-? in acceptor proteins)).

Belongs to the URM1 family. C-terminal thiocarboxylation occurs in 2 steps, it is first acyl-adenylated (-COAMP) via the hesA/moeB/thiF part of the MOCS3 homolog, then thiocarboxylated (-COSH) via the rhodanese domain of the MOCS3 homolog.

The protein resides in the cytoplasm. It functions in the pathway tRNA modification; 5-methoxycarbonylmethyl-2-thiouridine-tRNA biosynthesis. Its function is as follows. Acts as a sulfur carrier required for 2-thiolation of mcm(5)S(2)U at tRNA wobble positions of cytosolic tRNA(Lys), tRNA(Glu) and tRNA(Gln). Serves as sulfur donor in tRNA 2-thiolation reaction by being thiocarboxylated (-COSH) at its C-terminus by MOCS3. The sulfur is then transferred to tRNA to form 2-thiolation of mcm(5)S(2)U. Also acts as a ubiquitin-like protein (UBL) that is covalently conjugated via an isopeptide bond to lysine residues of target proteins. The thiocarboxylated form serves as substrate for conjugation and oxidative stress specifically induces the formation of UBL-protein conjugates. The polypeptide is Ubiquitin-related modifier 1 homolog 2 (Arabidopsis thaliana (Mouse-ear cress)).